The chain runs to 370 residues: Tomoregulin-1 (370 aa).

The first 36 residues, 1–36 (MDGLHPASWMLLLGSLAFWSASSLLLFSLALPGARA), serve as a signal peptide directing secretion. Topologically, residues 37 to 320 (SNQLLSECHN…VPSRQKLTHV (284 aa)) are extracellular. Asparagine 53 is a glycosylation site (N-linked (GlcNAc...) asparagine). Kazal-like domains are found at residues 88–135 (ICQF…PCFS) and 179–227 (VCNI…SCIE). 9 disulfide bridges follow: cysteine 89/cysteine 119, cysteine 93/cysteine 112, cysteine 101/cysteine 133, cysteine 180/cysteine 211, cysteine 184/cysteine 204, cysteine 193/cysteine 225, cysteine 265/cysteine 278, cysteine 273/cysteine 289, and cysteine 291/cysteine 300. An EGF-like domain is found at 261–301 (NYIPCSENYNGYCVHGKCELSYSSQKASCRCDSGYTGQYCD). A helical membrane pass occupies residues 321–341 (LIAAIIGAVQIAIIVAIVMCI). At 342–370 (TRKCPKNNRGRRQKQNLGHFSSDTSSRMV) the chain is on the cytoplasmic side. Positions 349-370 (NRGRRQKQNLGHFSSDTSSRMV) are disordered. Polar residues predominate over residues 356–370 (QNLGHFSSDTSSRMV).

Belongs to the tomoregulin family. In terms of assembly, interacts with cripto. In terms of tissue distribution, expressed at highest levels in brain, and at lower levels in neuroendocrine tissues. Present in neurons from the diencephalon (at protein level).

The protein resides in the cell membrane. In terms of biological role, inhibits nodal/nr-1 and bmp signaling during neural patterning through interaction with cripto. The chain is Tomoregulin-1 (tmeff1) from Xenopus laevis (African clawed frog).